The primary structure comprises 84 residues: Putative membrane protein insertion efficiency factor (84 aa).

The disordered stretch occupies residues 63–84; it reads WGGSGYDPVPGADPEHDRRPRG. Residues 75-84 are compositionally biased toward basic and acidic residues; it reads DPEHDRRPRG.

It belongs to the UPF0161 family.

The protein localises to the cell inner membrane. In terms of biological role, could be involved in insertion of integral membrane proteins into the membrane. The chain is Putative membrane protein insertion efficiency factor from Cereibacter sphaeroides (strain ATCC 17025 / ATH 2.4.3) (Rhodobacter sphaeroides).